The primary structure comprises 63 residues: MRGTSFILFAVVVILGFLHGNAEPLANPEPSANPDPLANPDPLANPEAFDLLGLVKSVVSALG.

An N-terminal signal peptide occupies residues 1–22 (MRGTSFILFAVVVILGFLHGNA). AXPX repeat units lie at residues 22 to 25 (AEPL), 26 to 29 (ANPE), 32 to 35 (ANPD), 38 to 41 (ANPD), and 44 to 47 (ANPE). A propeptide spanning residues 23 to 48 (EPLANPEPSANPDPLANPDPLANPEA) is cleaved from the precursor. At L62 the chain carries Leucine amide.

The protein belongs to the MCD family. Mastoparan subfamily. Expressed by the venom gland.

The protein resides in the secreted. It localises to the target cell membrane. Functionally, antimicrobial peptide with strong and moderate activity against the fungi B.cinerea (MIC=5 uM) and C.albicans (MIC=100 uM), the Gram-negative bacterium E.coli (MIC=200 uM) and the Gram-positive bacterium S.aureus (MIC=25 uM). Shows cytolytic activity against insect cell lines. Has potent hemolytic activity against human erythrocytes (EC(50)=64 uM). In vivo, peptide injection in the vicinity of the head and thorax of lepidopteran larvae induces feeding disorder followed by death due to starvation. The chain is Venom peptide 2b from Eumenes pomiformis (Potter wasp).